Reading from the N-terminus, the 356-residue chain is Tyrosine recombinase XerS (356 aa).

The region spanning 16-121 (LMPWFVLEYY…ALSSLYKYLT (106 aa)) is the Core-binding (CB) domain. A Tyr recombinase domain is found at 169–354 (KFLDYVENEY…VNDEQKNALD (186 aa)). Residues Arg210, Lys234, His306, Arg309, and His332 contribute to the active site. Tyr341 (O-(3'-phospho-DNA)-tyrosine intermediate) is an active-site residue.

Belongs to the 'phage' integrase family. XerS subfamily.

The protein localises to the cytoplasm. Its activity is regulated as follows. FtsK is required for recombination. In terms of biological role, site-specific tyrosine recombinase, which acts by catalyzing the cutting and rejoining of the recombining DNA molecules. Essential to convert dimers of the bacterial chromosome into monomers to permit their segregation at cell division. This chain is Tyrosine recombinase XerS, found in Streptococcus thermophilus (strain ATCC BAA-491 / LMD-9).